The following is a 123-amino-acid chain: Ribosome-binding factor A (123 aa).

The protein belongs to the RbfA family. As to quaternary structure, monomer. Binds 30S ribosomal subunits, but not 50S ribosomal subunits or 70S ribosomes.

It localises to the cytoplasm. One of several proteins that assist in the late maturation steps of the functional core of the 30S ribosomal subunit. Associates with free 30S ribosomal subunits (but not with 30S subunits that are part of 70S ribosomes or polysomes). Required for efficient processing of 16S rRNA. May interact with the 5'-terminal helix region of 16S rRNA. The chain is Ribosome-binding factor A from Syntrophus aciditrophicus (strain SB).